A 297-amino-acid chain; its full sequence is MHLVIVSGLSGSGKTTALHVLEDVGFNCIDNLPVSLLPALVAQIEIHKDQAQKFAIGIDVRNAWQDLSLFPKMVSTLKEAHLPFHTIYLDSHPSVLIQRFSETRRKHPLSDKSTSLEEAIALEQNLLEPIRDAADQTIDTSHLNLHELRDLVKDRVVGRTEATMAILFESFGFKHGTPVNADLVFDARCLPNPHWKPHLRPQTGLDADVVEFLEEQVTVQEMYADIEHYLTRWLPRYQANNRSYITIAIGCTGGQHRSVYLSERLKKHFDQYYQDVQVRHRDIHKHQKHHNHAPANS.

8 to 15 (GLSGSGKT) contacts ATP. 59 to 62 (DVRN) serves as a coordination point for GTP.

Belongs to the RapZ-like family.

Functionally, displays ATPase and GTPase activities. This is Nucleotide-binding protein CJA_2809 from Cellvibrio japonicus (strain Ueda107) (Pseudomonas fluorescens subsp. cellulosa).